Consider the following 279-residue polypeptide: Acetylglutamate kinase (279 aa).

Residues 64–65 (GG), Arg-86, and Asn-177 contribute to the substrate site.

The protein belongs to the acetylglutamate kinase family. ArgB subfamily.

It localises to the cytoplasm. It catalyses the reaction N-acetyl-L-glutamate + ATP = N-acetyl-L-glutamyl 5-phosphate + ADP. Its pathway is amino-acid biosynthesis; L-arginine biosynthesis; N(2)-acetyl-L-ornithine from L-glutamate: step 2/4. In terms of biological role, catalyzes the ATP-dependent phosphorylation of N-acetyl-L-glutamate. This Campylobacter jejuni subsp. jejuni serotype O:2 (strain ATCC 700819 / NCTC 11168) protein is Acetylglutamate kinase.